The primary structure comprises 1224 residues: Protein MSN5 (1224 aa).

The tract at residues 1200-1224 (NKENGDMLDDPNIEDGAVGNLFDDN) is disordered.

In terms of assembly, interacts with CEX1.

The sequence is that of Protein MSN5 (MSN5) from Saccharomyces cerevisiae (strain ATCC 204508 / S288c) (Baker's yeast).